The following is a 232-amino-acid chain: Ribonuclease 3 (232 aa).

The RNase III domain occupies 6 to 133 (FNDIENRLGV…VIAAVYLDKG (128 aa)). Residue Glu46 coordinates Mg(2+). The active site involves Asp50. Asp119 and Glu122 together coordinate Mg(2+). Residue Glu122 is part of the active site. A DRBM domain is found at 160–229 (DFKTKLQELL…AKEALKRLEK (70 aa)).

The protein belongs to the ribonuclease III family. In terms of assembly, homodimer. It depends on Mg(2+) as a cofactor.

Its subcellular location is the cytoplasm. It carries out the reaction Endonucleolytic cleavage to 5'-phosphomonoester.. Its function is as follows. Digests double-stranded RNA. Involved in the processing of primary rRNA transcript to yield the immediate precursors to the large and small rRNAs (23S and 16S). Processes some mRNAs, and tRNAs when they are encoded in the rRNA operon. Processes pre-crRNA and tracrRNA of type II CRISPR loci if present in the organism. The sequence is that of Ribonuclease 3 from Clostridium botulinum (strain Eklund 17B / Type B).